A 566-amino-acid chain; its full sequence is Arginine--tRNA ligase (566 aa).

The 'HIGH' region signature appears at 123–133 (PNIAKPFHIGH).

The protein belongs to the class-I aminoacyl-tRNA synthetase family. As to quaternary structure, monomer.

The protein resides in the cytoplasm. It catalyses the reaction tRNA(Arg) + L-arginine + ATP = L-arginyl-tRNA(Arg) + AMP + diphosphate. The chain is Arginine--tRNA ligase from Halothermothrix orenii (strain H 168 / OCM 544 / DSM 9562).